A 256-amino-acid polypeptide reads, in one-letter code: V-type proton ATPase subunit D (256 aa).

Basic and acidic residues predominate over residues 211–230 (QNETAKLDAEMKLKRDRAEQ). The tract at residues 211 to 256 (QNETAKLDAEMKLKRDRAEQDASEVAADEEPQGETLVADQEDDVIF) is disordered.

The protein belongs to the V-ATPase D subunit family. In terms of assembly, V-ATPase is a heteromultimeric enzyme composed of a peripheral catalytic V1 complex (components A to H) attached to an integral membrane V0 proton pore complex (components: a, c, c', c'', d, e, f and VOA1). Interacts with RAV1 and RAV2 components of the RAVE complex, which are essential for the stability and assembly of V-ATPase.

Its subcellular location is the vacuole membrane. Functionally, subunit of the V1 complex of vacuolar(H+)-ATPase (V-ATPase), a multisubunit enzyme composed of a peripheral complex (V1) that hydrolyzes ATP and a membrane integral complex (V0) that translocates protons. V-ATPase is responsible for acidifying and maintaining the pH of intracellular compartments. The sequence is that of V-type proton ATPase subunit D from Saccharomyces cerevisiae (strain ATCC 204508 / S288c) (Baker's yeast).